The primary structure comprises 196 residues: Probable malonic semialdehyde reductase RutE (196 aa).

It belongs to the nitroreductase family. HadB/RutE subfamily. It depends on FMN as a cofactor.

It carries out the reaction 3-hydroxypropanoate + NADP(+) = 3-oxopropanoate + NADPH + H(+). May reduce toxic product malonic semialdehyde to 3-hydroxypropionic acid, which is excreted. The sequence is that of Probable malonic semialdehyde reductase RutE from Shigella dysenteriae serotype 1 (strain Sd197).